An 863-amino-acid polypeptide reads, in one-letter code: Glycogen phosphorylase (863 aa).

Position 618 is an N6-(pyridoxal phosphate)lysine (Lys618).

This sequence belongs to the glycogen phosphorylase family. Pyridoxal 5'-phosphate serves as cofactor.

The enzyme catalyses [(1-&gt;4)-alpha-D-glucosyl](n) + phosphate = [(1-&gt;4)-alpha-D-glucosyl](n-1) + alpha-D-glucose 1-phosphate. Functionally, phosphorylase is an important allosteric enzyme in carbohydrate metabolism. Enzymes from different sources differ in their regulatory mechanisms and in their natural substrates. However, all known phosphorylases share catalytic and structural properties. The polypeptide is Glycogen phosphorylase (glgP) (Mycobacterium tuberculosis (strain ATCC 25618 / H37Rv)).